The sequence spans 290 residues: Type II restriction enzyme MjaIII (290 aa).

The protein belongs to the DpnII type II restriction endonuclease family.

The catalysed reaction is Endonucleolytic cleavage of DNA to give specific double-stranded fragments with terminal 5'-phosphates.. A P subtype restriction enzyme that recognizes the double-stranded sequence 5'-GATC-3'; the cleavage site is unknown. This Methanocaldococcus jannaschii (strain ATCC 43067 / DSM 2661 / JAL-1 / JCM 10045 / NBRC 100440) (Methanococcus jannaschii) protein is Type II restriction enzyme MjaIII (mjaIIIR).